Reading from the N-terminus, the 1553-residue chain is ABC-type transporter cctS (1553 aa).

The next 4 helical transmembrane spans lie at 27 to 47 (LIPL…YFHA), 90 to 110 (LEVA…IFSG), 114 to 134 (DLTS…ILFV), and 151 to 171 (SVLY…AILG). N-linked (GlcNAc...) asparagine glycosylation is present at N176. Transmembrane regions (helical) follow at residues 177–197 (FTIA…FHWT), 286–306 (LLWQ…PPVL), 324–344 (TAWL…VAGC), 413–433 (GYLY…TYLL), and 438–458 (GISG…NILI). The ABC transmembrane type-1 1 domain maps to 293-582 (ATLNSFAVFV…IADAITFLLR (290 aa)). A glycan (N-linked (GlcNAc...) asparagine) is linked at N524. 2 helical membrane-spanning segments follow: residues 527–547 (TFFS…TVVW) and 550–570 (SMGT…RIPF). An N-linked (GlcNAc...) asparagine glycan is attached at N617. The 240-residue stretch at 635-874 (NKRSDIQLTE…GRIDADIMQN (240 aa)) folds into the ABC transporter 1 domain. ATP is bound at residue 670 to 677 (GPSGSGKS). N725 carries N-linked (GlcNAc...) asparagine glycosylation. A helical membrane pass occupies residues 948-970 (WYWVLVLFMFGIQQFISLATNIW). The ABC transmembrane type-1 2 domain occupies 951–1255 (VLVLFMFGIQ…FVQLYAIVQQ (305 aa)). N992 is a glycosylation site (N-linked (GlcNAc...) asparagine). Residues 1017–1037 (IYVAICLAYAFFTFARDLIVF) traverse the membrane as a helical segment. N1085 carries N-linked (GlcNAc...) asparagine glycosylation. 4 helical membrane passes run 1086 to 1108 (ISTF…VFIS), 1113 to 1135 (AFLI…FING), 1204 to 1224 (FLGS…LESV), and 1229 to 1249 (AALV…FVQL). The region spanning 1294 to 1533 (VRFDAYTTRY…DDDGIFRRLC (240 aa)) is the ABC transporter 2 domain. Position 1328 to 1335 (1328 to 1335 (GRTGAGKS)) interacts with ATP.

This sequence belongs to the ABC transporter superfamily.

The protein localises to the membrane. It participates in mycotoxin biosynthesis. ABC-type transporter; part of the gene cluster that mediates the biosynthesis of the mycotoxin cyclochlorotine, a hepatotoxic and carcinogenic cyclic chlorinated pentapeptide. CctS is essential for the biosynthesis of cyclochlorotine, maybe as a chloride channel that supplies chloride for chlorination by cctP2. This chain is ABC-type transporter cctS, found in Talaromyces islandicus (Penicillium islandicum).